The following is a 304-amino-acid chain: Ribosomal protein L11 methyltransferase (304 aa).

S-adenosyl-L-methionine contacts are provided by Thr152, Gly173, Asp195, and Asn234.

Belongs to the methyltransferase superfamily. PrmA family.

Its subcellular location is the cytoplasm. It catalyses the reaction L-lysyl-[protein] + 3 S-adenosyl-L-methionine = N(6),N(6),N(6)-trimethyl-L-lysyl-[protein] + 3 S-adenosyl-L-homocysteine + 3 H(+). Methylates ribosomal protein L11. The sequence is that of Ribosomal protein L11 methyltransferase from Cupriavidus metallidurans (strain ATCC 43123 / DSM 2839 / NBRC 102507 / CH34) (Ralstonia metallidurans).